The following is a 74-amino-acid chain: Protein SOM1, mitochondrial (74 aa).

In terms of assembly, component of the mitochondrial inner membrane peptidase (IMP) complex which at least consists of IMP1, IMP2 and SOM1.

The protein localises to the mitochondrion inner membrane. Non-catalytic component of the mitochondrial inner membrane peptidase (IMP) complex. IMP catalyzes the removal of signal peptides required for the targeting of proteins from the mitochondrial matrix, across the inner membrane, into the inter-membrane space. SOM1 facilitates cleavage of a subset of IMP substrates. This is Protein SOM1, mitochondrial (SOM1) from Saccharomyces cerevisiae (strain ATCC 204508 / S288c) (Baker's yeast).